Consider the following 549-residue polypeptide: Chaperonin GroEL (549 aa).

ATP-binding positions include 30–33, Lys-51, 87–91, Gly-415, 479–481, and Asp-495; these read TLGP, DGTTT, and NAA.

The protein belongs to the chaperonin (HSP60) family. Forms a cylinder of 14 subunits composed of two heptameric rings stacked back-to-back. Interacts with the co-chaperonin GroES.

The protein resides in the cytoplasm. It catalyses the reaction ATP + H2O + a folded polypeptide = ADP + phosphate + an unfolded polypeptide.. Its function is as follows. Together with its co-chaperonin GroES, plays an essential role in assisting protein folding. The GroEL-GroES system forms a nano-cage that allows encapsulation of the non-native substrate proteins and provides a physical environment optimized to promote and accelerate protein folding. This is Chaperonin GroEL from Stenotrophomonas maltophilia (strain R551-3).